The primary structure comprises 205 residues: NADH-quinone oxidoreductase subunit C (205 aa).

Belongs to the complex I 30 kDa subunit family. In terms of assembly, NDH-1 is composed of 14 different subunits. Subunits NuoB, C, D, E, F, and G constitute the peripheral sector of the complex.

The protein localises to the cell inner membrane. The catalysed reaction is a quinone + NADH + 5 H(+)(in) = a quinol + NAD(+) + 4 H(+)(out). NDH-1 shuttles electrons from NADH, via FMN and iron-sulfur (Fe-S) centers, to quinones in the respiratory chain. The immediate electron acceptor for the enzyme in this species is believed to be ubiquinone. Couples the redox reaction to proton translocation (for every two electrons transferred, four hydrogen ions are translocated across the cytoplasmic membrane), and thus conserves the redox energy in a proton gradient. The polypeptide is NADH-quinone oxidoreductase subunit C (Bartonella bacilliformis (strain ATCC 35685 / KC583 / Herrer 020/F12,63)).